Here is a 152-residue protein sequence, read N- to C-terminus: MSLVVPDNFQHILRLLNTNVDGKVKVMFAMTQIKGVGRRYANIVCKKADIDMSKRAGELTTEELERIVTIIQNPSQFKIPSWFLNRQKDINDGKSFQLLANNVDSKLREDLERLKKIQTHRGLRHALDLRVRGQHTKTTGRRGKTVGVSKKK.

This sequence belongs to the universal ribosomal protein uS13 family. Component of the small ribosomal subunit (SSU). Mature yeast ribosomes consist of a small (40S) and a large (60S) subunit. The 40S small subunit contains 1 molecule of ribosomal RNA (18S rRNA) and at least 33 different proteins. The large 60S subunit contains 3 rRNA molecules (25S, 5.8S and 5S rRNA) and at least 46 different proteins.

It is found in the cytoplasm. Component of the ribosome, a large ribonucleoprotein complex responsible for the synthesis of proteins in the cell. The small ribosomal subunit (SSU) binds messenger RNAs (mRNAs) and translates the encoded message by selecting cognate aminoacyl-transfer RNA (tRNA) molecules. The large subunit (LSU) contains the ribosomal catalytic site termed the peptidyl transferase center (PTC), which catalyzes the formation of peptide bonds, thereby polymerizing the amino acids delivered by tRNAs into a polypeptide chain. The nascent polypeptides leave the ribosome through a tunnel in the LSU and interact with protein factors that function in enzymatic processing, targeting, and the membrane insertion of nascent chains at the exit of the ribosomal tunnel. This is Small ribosomal subunit protein uS13A (rps1801) from Schizosaccharomyces pombe (strain 972 / ATCC 24843) (Fission yeast).